We begin with the raw amino-acid sequence, 449 residues long: MASTLTTGLPPGPRLPRYLQSVLYLRFREWFLPAMHRKYGDVFSLRVPPYADNLVVYTRPEHIKEIFAADPRSLHAGEGNHILGFVMGEHSVLMTDEAEHARMRSLLMPAFTRAALRGYRDMIASVAREHITRWRPHATINSLDHMNALTLDIILRVVFGVTDPKVKAELTSRLQQIINIHPAILAGVPYPSLKRMNPWKRFFHNQTKIDEILYREIASRRIDSDLTARTDVLSRLLQTKDTPTKPLTDAELRDQLITLLLAGHETTAAALSWTLWELAHAPEIQSQVVWAAVGGDDGFLEAVLKEGMRRHTVIASTARKVTAPAEIGGWRLPAGTVVNTSILLAHASEVSHPKPTEFRPSRFLDGSVAPNTWLPFGGGVRRCLGFGFALTEGAVILQEIFRRFTITAAGPSKGETPLVRNITTVPKHGAHLRLIPQRRLGGLGDSDPP.

Residue C383 participates in heme binding.

Belongs to the cytochrome P450 family. Heme serves as cofactor.

This chain is Putative cytochrome P450 135A1 (cyp135A1), found in Mycobacterium tuberculosis (strain CDC 1551 / Oshkosh).